A 504-amino-acid chain; its full sequence is Sodium-coupled neutral amino acid symporter 2 (504 aa).

The segment at 1–23 (MKKTEMGRFNISPDEDSSSYSSN) is disordered. The Cytoplasmic segment spans residues 1–76 (MKKTEMGRFN…HPGTTSFGMS (76 aa)). The regulates protein turnover upon amino acid deprivation stretch occupies residues 1 to 96 (MKKTEMGRFN…SGILGLSYAM (96 aa)). Phosphoserine is present on residues S12, S21, S22, and S55. A helical membrane pass occupies residues 77-96 (VFNLSNAIVGSGILGLSYAM). N82 is a Na(+) binding site. The Extracellular segment spans residues 97 to 102 (ANTGIA). The chain crosses the membrane as a helical span at residues 103–123 (LFIILLTFVSIFSLYSVHLLL). At 124–158 (KTANEGGSLLYEQLGHKAYGLAGKLAASGSITMQN) the chain is on the cytoplasmic side. The helical transmembrane segment at 159-177 (IGAMSSYLFIVKYELPLVI) threads the bilayer. Over 178-188 (KALMNIEDTNG) the chain is Extracellular. The helical transmembrane segment at 189–209 (LWYLNGDYLVLLVSLVLILPL) threads the bilayer. At 210–217 (SLLRNLGY) the chain is on the cytoplasmic side. The helical transmembrane segment at 218–238 (LGYTSGLSLLCMIFFLIVVIC) threads the bilayer. At 239 to 289 (KKFQIPCPVEAALVANETVNGTFTQAALALAFNSTADDACRPRYFIFNSQT) the chain is on the extracellular side. An intrachain disulfide couples C245 to C278. Residues N254 and N258 are each glycosylated (N-linked (GlcNAc...) asparagine). The helical transmembrane segment at 290 to 310 (VYAVPILTFSFVCHPAVLPIY) threads the bilayer. At 311–326 (EELKSRSRRRMMNVSK) the chain is on the cytoplasmic side. The chain crosses the membrane as a helical span at residues 327–347 (ISFFAMFLMYLLAALFGYLTF). Residues 348 to 368 (YGHVESELLHTYSEIVGTDIL) lie on the Extracellular side of the membrane. Residues 369-389 (LLVVRLAVLVAVTLTVPVVIF) traverse the membrane as a helical segment. Residue T383 coordinates Na(+). The Cytoplasmic segment spans residues 390–410 (PIRSSVTHLLCPTKEFSWLRH). Residues 411-431 (SIITVTILSFTNLLVIFVPTI) traverse the membrane as a helical segment. The Extracellular portion of the chain corresponds to 432-433 (RD). Residues 434–454 (IFGFIGASAAAMLIFILPSAF) form a helical membrane-spanning segment. At 455-469 (YIKLVKKEPMRSVQK) the chain is on the cytoplasmic side. A helical transmembrane segment spans residues 470–492 (IGALCFLLSGIVVMIGSMGLIVL). At 493-504 (DWVHDASAAGGH) the chain is on the extracellular side.

This sequence belongs to the amino acid/polyamine transporter 2 family. In terms of processing, polyubiquitination by NEDD4L regulates the degradation and the activity of SLC38A2. As to expression, expressed in cerebral and cerebellar astrocytes and neurons.

The protein localises to the cell membrane. It carries out the reaction L-alanine(in) + Na(+)(in) = L-alanine(out) + Na(+)(out). It catalyses the reaction glycine(in) + Na(+)(in) = glycine(out) + Na(+)(out). The enzyme catalyses L-serine(in) + Na(+)(in) = L-serine(out) + Na(+)(out). The catalysed reaction is L-proline(in) + Na(+)(in) = L-proline(out) + Na(+)(out). It carries out the reaction L-methionine(in) + Na(+)(in) = L-methionine(out) + Na(+)(out). It catalyses the reaction L-histidine(in) + Na(+)(in) = L-histidine(out) + Na(+)(out). The enzyme catalyses L-asparagine(in) + Na(+)(in) = L-asparagine(out) + Na(+)(out). The catalysed reaction is L-glutamine(in) + Na(+)(in) = L-glutamine(out) + Na(+)(out). It carries out the reaction L-threonine(in) + Na(+)(in) = L-threonine(out) + Na(+)(out). It catalyses the reaction L-leucine(in) + Na(+)(in) = L-leucine(out) + Na(+)(out). The enzyme catalyses L-phenylalanine(in) + Na(+)(in) = L-phenylalanine(out) + Na(+)(out). Inhibited by N-methyl-D-glucamine. Inhibited by choline. Allosteric regulation of sodium ions binding by pH. Symporter that cotransports neutral amino acids and sodium ions from the extracellular to the intracellular side of the cell membrane. The transport is pH-sensitive, Li(+)-intolerant, electrogenic, driven by the Na(+) electrochemical gradient and cotransports of neutral amino acids and sodium ions with a stoichiometry of 1:1. May function in the transport of amino acids at the blood-brain barrier. May function in the transport of amino acids in the supply of maternal nutrients to the fetus through the placenta. Maintains a key metabolic glutamine/glutamate balance underpinning retrograde signaling by dendritic release of the neurotransmitter glutamate. Transports L-proline in differentiating osteoblasts for the efficient synthesis of proline-enriched proteins and provides proline essential for osteoblast differentiation and bone formation during bone development. In Mus musculus (Mouse), this protein is Sodium-coupled neutral amino acid symporter 2.